The primary structure comprises 528 residues: MKGDYWRTHCIMDCSLLVFALICGSIIGYFLYSFFNQKKLEEKKQAFDDKLKEKEKDLQQREQEMMRNAKIEITSLRQKLELDLEQRTNTIVDLESKNNRREELFNNRTESLNKREEHLDSEQQIISHTKKNLEQQIKEQETILNTQKQQLEKIASLTQDQARQIIMKETRDQTTYEMMSYIKQEEEKAKSEASKKAKTLLVLAMQKYAGDITGEKNISVVNIPNEDMKGRIIGRQGRNIKSLEVLTGVDLIIDESPCTIILSSFDPIRREIAKKTLEFLVSDGRIHPSRIEKALETSTIEVDNFIKEMGEEAAFITKIGEVHPDLIKILGKLHFRISYSQNVLKHSLEVAFLAGKLASEIGENEILARRAGLFHDIGKALDHEMEGSHVEIGVFIASKYKEKKEVIDAIASHHEDQEPQSIIAVLVAIADTLSSARPGARKESVENYIQRLTKLETIANATEGVAKSYAIQAGREIRVIVEPDKIADNFIFQTARTIKEQIEKDISYNGVIKVTVIRETRAVEMAKL.

Residues 15 to 35 form a helical membrane-spanning segment; that stretch reads SLLVFALICGSIIGYFLYSFF. Residues 217–277 enclose the KH domain; that stretch reads NISVVNIPNE…IRREIAKKTL (61 aa). One can recognise an HD domain in the interval 343–436; sequence VLKHSLEVAF…VAIADTLSSA (94 aa).

It belongs to the RNase Y family.

The protein resides in the cell membrane. Endoribonuclease that initiates mRNA decay. In Onion yellows phytoplasma (strain OY-M), this protein is Ribonuclease Y.